The chain runs to 433 residues: Divergent protein kinase domain 2B (433 aa).

Residues 1 to 31 form the signal peptide; that stretch reads MEPQLGPEAAALRPGWLALLLWVSALSCSFS. The N-linked (GlcNAc...) asparagine glycan is linked to Asn100.

This sequence belongs to the DIPK family.

The protein localises to the secreted. The chain is Divergent protein kinase domain 2B from Homo sapiens (Human).